A 707-amino-acid polypeptide reads, in one-letter code: E3 ubiquitin-protein ligase Praja-2 (707 aa).

Residues 1-10 (MSQYTEKEPS) are compositionally biased toward basic and acidic residues. Disordered regions lie at residues 1-23 (MSQYTEKEPSVMDQDSSKAAWPR), 75-120 (NTAG…PSVA), and 242-290 (AGDA…CVPG). At serine 2 the chain carries N-acetylserine. A compositionally biased stretch (polar residues) spans 109–119 (LNQSTESNPSV). Residues 246–276 (EAVHQDGQEFQRSSEDGIVRKRRQDDTDQGR) are compositionally biased toward basic and acidic residues. Residues serine 306 and serine 320 each carry the phosphoserine modification. Serine 339 carries the phosphoserine; by PKA modification. Disordered stretches follow at residues 380–403 (VTPREAERHRATAENGATASGRQE) and 424–493 (EDSS…QTSL). Residues 381-391 (TPREAERHRAT) show a composition bias toward basic and acidic residues. The residue at position 430 (serine 430) is a Phosphoserine. Over residues 465–481 (NEPELQSDSSGPEEENQ) the composition is skewed to acidic residues. Over residues 482–491 (ELSLQEGEQT) the composition is skewed to polar residues. The interval 530–707 (DGNNNLEDDS…PANDNAEEAP (178 aa)) is interaction with PRKAR1A, PRKAR2A and PRKAR2B. Residues 549-569 (WSLFDGFADGLGVAEAISYVD) are mediates interaction with TBC1D31. An RING-type; atypical zinc finger spans residues 633-674 (CPICCSEYIKDDIATELPCHHFFHKPCVSIWLQKSGTCPVCR). Residues 686 to 707 (AAASSEPDLDASPANDNAEEAP) are disordered.

In terms of assembly, binds ubiquitin-conjugating enzymes (E2s). In vitro, interacts with the ubiquitin-conjugating enzyme, UBE2D2. The phosphorylated form interacts with PRKAR1A, PRKAR2A and PRKAR2B. Binds the catalytic subunits of cAMP-dependent protein kinase. Interacts with MFHAS1. Interacts with TBC1D31; the interaction is direct and recruits PJA2 to centrosomes. In terms of tissue distribution, highly expressed in the brain, in nerve cells but not in glial cells. Abundantly expressed in pyramidal neurons and in the CA3 region of apical dendrites. Colocalizes with PRKAR2B in dentate granule cells and at postsynaptic sites of primary hippocampal neurons.

It is found in the cytoplasm. Its subcellular location is the cell membrane. The protein resides in the endoplasmic reticulum membrane. The protein localises to the golgi apparatus membrane. It localises to the synapse. It is found in the postsynaptic density. Its subcellular location is the cytoskeleton. The protein resides in the microtubule organizing center. The protein localises to the centrosome. The catalysed reaction is S-ubiquitinyl-[E2 ubiquitin-conjugating enzyme]-L-cysteine + [acceptor protein]-L-lysine = [E2 ubiquitin-conjugating enzyme]-L-cysteine + N(6)-ubiquitinyl-[acceptor protein]-L-lysine.. It functions in the pathway protein modification; protein ubiquitination. In terms of biological role, has E2-dependent E3 ubiquitin-protein ligase activity. Responsible for ubiquitination of cAMP-dependent protein kinase type I and type II-alpha/beta regulatory subunits and for targeting them for proteasomal degradation. Essential for PKA-mediated long-term memory processes. Through the ubiquitination of MFHAS1, positively regulates the TLR2 signaling pathway that leads to the activation of the downstream p38 and JNK MAP kinases and promotes the polarization of macrophages toward the pro-inflammatory M1 phenotype. Plays a role in ciliogenesis by ubiquitinating OFD1. The polypeptide is E3 ubiquitin-protein ligase Praja-2 (Pja2) (Rattus norvegicus (Rat)).